The primary structure comprises 89 residues: Small ribosomal subunit protein uS15 (89 aa).

Belongs to the universal ribosomal protein uS15 family. In terms of assembly, part of the 30S ribosomal subunit. Forms a bridge to the 50S subunit in the 70S ribosome, contacting the 23S rRNA.

One of the primary rRNA binding proteins, it binds directly to 16S rRNA where it helps nucleate assembly of the platform of the 30S subunit by binding and bridging several RNA helices of the 16S rRNA. Its function is as follows. Forms an intersubunit bridge (bridge B4) with the 23S rRNA of the 50S subunit in the ribosome. This is Small ribosomal subunit protein uS15 from Streptococcus suis (strain 98HAH33).